We begin with the raw amino-acid sequence, 69 residues long: MSRIVLALIRFYQLAISPWLPPRCRYQPTCSQYAIEAVQKHGALKGGWLALRRIGRCHPWGSSGYDPVP.

It belongs to the UPF0161 family.

The protein localises to the cell inner membrane. Its function is as follows. Could be involved in insertion of integral membrane proteins into the membrane. The polypeptide is Putative membrane protein insertion efficiency factor (Laribacter hongkongensis (strain HLHK9)).